Reading from the N-terminus, the 824-residue chain is Tuftelin-interacting protein 11 (824 aa).

The tract at residues Met-1–Asn-135 is disordered. A compositionally biased stretch (acidic residues) spans Glu-11–Asp-25. 2 stretches are compositionally biased toward basic and acidic residues: residues Gln-41–Pro-61 and Pro-85–Lys-114. The segment covering Lys-122–Asn-135 has biased composition (polar residues). A G-patch domain is found at Thr-145–Ser-191.

Belongs to the TFP11/STIP family. In terms of assembly, identified in the spliceosome C complex.

Its subcellular location is the nucleus. In terms of biological role, involved in pre-mRNA splicing, specifically in spliceosome disassembly during late-stage splicing events. This chain is Tuftelin-interacting protein 11 (tfip11), found in Xenopus laevis (African clawed frog).